The chain runs to 203 residues: Small ribosomal subunit protein uS2 (203 aa).

This sequence belongs to the universal ribosomal protein uS2 family.

This Methanoregula boonei (strain DSM 21154 / JCM 14090 / 6A8) protein is Small ribosomal subunit protein uS2.